Consider the following 199-residue polypeptide: Recombination protein RecR (199 aa).

Residues 57 to 72 (CEKCNNFTEEVVCELC) form a C4-type zinc finger. The region spanning 80–175 (ALLCVVEMPA…KITRIARGLP (96 aa)) is the Toprim domain.

It belongs to the RecR family.

Functionally, may play a role in DNA repair. It seems to be involved in an RecBC-independent recombinational process of DNA repair. It may act with RecF and RecO. The polypeptide is Recombination protein RecR (Nitrosospira multiformis (strain ATCC 25196 / NCIMB 11849 / C 71)).